The following is a 209-amino-acid chain: Probable GTP-binding protein EngB (209 aa).

One can recognise an EngB-type G domain in the interval 22-198 (TPLEIAFVGR…NRTVGSWFDA (177 aa)). The Mg(2+) site is built by Ser-37 and Thr-59.

The protein belongs to the TRAFAC class TrmE-Era-EngA-EngB-Septin-like GTPase superfamily. EngB GTPase family. Mg(2+) is required as a cofactor.

Necessary for normal cell division and for the maintenance of normal septation. The polypeptide is Probable GTP-binding protein EngB (Neisseria gonorrhoeae).